Here is a 198-residue protein sequence, read N- to C-terminus: Protein ORFi in retron Ec67 (198 aa).

The protein belongs to the CI repressor protein family.

The protein is Protein ORFi in retron Ec67 of Escherichia coli.